The primary structure comprises 114 residues: Large ribosomal subunit protein uL22 (114 aa).

Belongs to the universal ribosomal protein uL22 family. In terms of assembly, part of the 50S ribosomal subunit.

Functionally, this protein binds specifically to 23S rRNA; its binding is stimulated by other ribosomal proteins, e.g. L4, L17, and L20. It is important during the early stages of 50S assembly. It makes multiple contacts with different domains of the 23S rRNA in the assembled 50S subunit and ribosome. In terms of biological role, the globular domain of the protein is located near the polypeptide exit tunnel on the outside of the subunit, while an extended beta-hairpin is found that lines the wall of the exit tunnel in the center of the 70S ribosome. This is Large ribosomal subunit protein uL22 from Ehrlichia ruminantium (strain Gardel).